Reading from the N-terminus, the 180-residue chain is dCTP deaminase, dUMP-forming (180 aa).

DCTP is bound by residues 100–105, Asp-117, 125–127, Gln-146, Tyr-160, and Gln-167; these read RSSLGR and TLE. Residue Glu-127 is the Proton donor/acceptor of the active site.

It belongs to the dCTP deaminase family. As to quaternary structure, homotrimer.

It carries out the reaction dCTP + 2 H2O = dUMP + NH4(+) + diphosphate. The protein operates within pyrimidine metabolism; dUMP biosynthesis; dUMP from dCTP: step 1/1. Bifunctional enzyme that catalyzes both the deamination of dCTP to dUTP and the hydrolysis of dUTP to dUMP without releasing the toxic dUTP intermediate. The protein is dCTP deaminase, dUMP-forming of Sulfurihydrogenibium sp. (strain YO3AOP1).